The primary structure comprises 273 residues: GDNF family receptor alpha-4 (273 aa).

Asn192 carries an N-linked (GlcNAc...) asparagine glycan. The GPI-anchor amidated asparagine moiety is linked to residue Asn250. Positions 251–273 (AGCCFLWVSSMSILTALALQALL) are cleaved as a propeptide — removed in mature form.

It belongs to the GDNFR family. Interacts with ARTN ligand and RET: forms a 2:2:2 ternary complex composed of ARTN ligand, GFRA3 and RET receptor. Interacts with SORL1. As to expression, weakly expressed in heart, brain and testis.

It is found in the cell membrane. Its subcellular location is the secreted. Receptor for persephin (PSPN), a growth factor that exhibits neurotrophic activity on mesencephalic dopaminergic and motor neurons. Acts by binding to its coreceptor, GFRA4, leading to autophosphorylation and activation of the RET receptor. May be important in C-cell development and, in the postnatal development of the adrenal medulla. In Rattus norvegicus (Rat), this protein is GDNF family receptor alpha-4 (Gfra4).